A 403-amino-acid polypeptide reads, in one-letter code: Metacaspase-7 (403 aa).

Catalysis depends on residues histidine 86 and cysteine 139. Cysteine 139 bears the S-nitrosocysteine mark.

It belongs to the peptidase C14B family. Post-translationally, proteolytically processed; by an autocatalytic mechanism. Expressed in roots, flowers and siliques.

The polypeptide is Metacaspase-7 (AMC7) (Arabidopsis thaliana (Mouse-ear cress)).